A 197-amino-acid chain; its full sequence is Secreted RxLR effector protein 48 (197 aa).

An N-terminal signal peptide occupies residues 1 to 27 (MCCVSWNWVLACTFLLIFLSWWNCCND). Residues 58–79 (RLLRVNLAANAEVLTHEIEEEK) carry the RxLR-dEER motif.

It belongs to the RxLR effector family.

Its subcellular location is the secreted. The protein localises to the host nucleus. It is found in the host cytoplasm. Secreted effector that completely suppresses the host cell death induced by cell death-inducing proteins. The protein is Secreted RxLR effector protein 48 of Plasmopara viticola (Downy mildew of grapevine).